The chain runs to 314 residues: ADP-L-glycero-D-manno-heptose-6-epimerase (314 aa).

Residues 10-11 (MI), 31-32 (DH), K38, R53, 75-79 (EGACS), and N92 contribute to the NADP(+) site. Y139 (proton acceptor) is an active-site residue. K143 provides a ligand contact to NADP(+). Residue N174 participates in substrate binding. Residues V175 and K183 each contribute to the NADP(+) site. The active-site Proton acceptor is K183. Residues S185, H192, 206–209 (FAGS), R214, and Y277 contribute to the substrate site.

It belongs to the NAD(P)-dependent epimerase/dehydratase family. HldD subfamily. Homopentamer. It depends on NADP(+) as a cofactor.

It carries out the reaction ADP-D-glycero-beta-D-manno-heptose = ADP-L-glycero-beta-D-manno-heptose. It participates in nucleotide-sugar biosynthesis; ADP-L-glycero-beta-D-manno-heptose biosynthesis; ADP-L-glycero-beta-D-manno-heptose from D-glycero-beta-D-manno-heptose 7-phosphate: step 4/4. Catalyzes the interconversion between ADP-D-glycero-beta-D-manno-heptose and ADP-L-glycero-beta-D-manno-heptose via an epimerization at carbon 6 of the heptose. This Vibrio cholerae serotype O1 (strain ATCC 39541 / Classical Ogawa 395 / O395) protein is ADP-L-glycero-D-manno-heptose-6-epimerase.